Consider the following 493-residue polypeptide: uncharacterized protein (493 aa).

A disordered region spans residues 316–403 (LNMVNFGPDD…NSVDNSVHDS (88 aa)). The segment covering 338 to 353 (ESQNNSESNSESITES) has biased composition (low complexity). Polar residues predominate over residues 371-398 (SQDNDTVQIDKSTSSDSVHNYFDNSVDN).

It belongs to the mimivirus R69 family.

This is an uncharacterized protein from Acanthamoeba polyphaga (Amoeba).